Here is a 767-residue protein sequence, read N- to C-terminus: Polyribonucleotide nucleotidyltransferase (767 aa).

Residues aspartate 488 and aspartate 494 each coordinate Mg(2+). The KH domain occupies proline 555 to isoleucine 614. Residues glycine 624–lysine 692 form the S1 motif domain. A compositionally biased stretch (basic and acidic residues) spans glycine 700–arginine 742. The segment at glycine 700–glutamine 767 is disordered. A compositionally biased stretch (low complexity) spans glycine 752 to glutamine 767.

Belongs to the polyribonucleotide nucleotidyltransferase family. Requires Mg(2+) as cofactor.

The protein localises to the cytoplasm. It carries out the reaction RNA(n+1) + phosphate = RNA(n) + a ribonucleoside 5'-diphosphate. Involved in mRNA degradation. Catalyzes the phosphorolysis of single-stranded polyribonucleotides processively in the 3'- to 5'-direction. The sequence is that of Polyribonucleotide nucleotidyltransferase from Leptothrix cholodnii (strain ATCC 51168 / LMG 8142 / SP-6) (Leptothrix discophora (strain SP-6)).